The following is an 807-amino-acid chain: MPTGRFETMREWVYDAISAQRNELLSLFSRYVAQGKGILQSHQLIDEFLKTVKVDGTLEDLNKSPFMKVLQSAEEAIVLPPFVALAIRPRPGVREYVRVNVYELSVDHLTVSEYLRFKEELVNGHANGDYLLELDFEPFNATLPRPTRSSSIGNGVQFLNRHLSSIMFRNKESMEPLLEFLRTHKHDGRPMMLNDRIQNIPILQGALARAEEFLSKLPLATPYSEFEFELQGMGFERGWGDTAQKVSEMVHLLLDILQAPDPSVLETFLGRIPMVFNVVILSPHGYFGQANVLGLPDTGGQVVYILDQVRALENEMLLRIQKQGLEVIPKILIVTRLLPEAKGTTCNQRLERVSGTEHAHILRIPFRTEKGILRKWISRFDVWPYLETFAEDASNEISAELQGVPNLIIGNYSDGNLVASLLASKLGVIQCNIAHALEKTKYPESDIYWRNHEDKYHFSSQFTADLIAMNNADFIITSTYQEIAGSKNNVGQYESHTAFTMPGLYRVVHGIDVFDPKFNIVSPGADMTIYFPYSDKERRLTALHESIEELLFSAEQNDEHVGLLSDQSKPIIFSMARLDRVKNLTGLVECYAKNSKLRELANLVIVGGYIDENQSRDREEMAEIQKMHSLIEQYDLHGEFRWIAAQMNRARNGELYRYIADTKGVFVQPAFYEAFGLTVVESMTCALPTFATCHGGPAEIIENGVSGFHIDPYHPDQVAATLVSFFETCNTNPNHWVKISEGGLKRIYERYTWKKYSERLLTLAGVYAFWKHVSKLERRETRRYLEMFYSLKFRDLANSIPLATDEN.

Positions 274 to 752 are GT-B glycosyltransferase; that stretch reads MVFNVVILSP…GLKRIYERYT (479 aa).

This sequence belongs to the glycosyltransferase 1 family. Plant sucrose synthase subfamily. In terms of tissue distribution, detected in the whole plant but at lower levels. Predominantly expressed in developing siliques. Also detected in the root tip. Detected in the embryo, endosperm and seed coat (at the protein level).

Its subcellular location is the cytoplasm. It localises to the plastid membrane. It catalyses the reaction an NDP-alpha-D-glucose + D-fructose = a ribonucleoside 5'-diphosphate + sucrose + H(+). Functionally, sucrose-cleaving enzyme that provides UDP-glucose and fructose for various metabolic pathways. Modulates metabolic homeostasis and directs carbon towards starch synthesis in developing seeds. The sequence is that of Sucrose synthase 2 (SUS2) from Arabidopsis thaliana (Mouse-ear cress).